Reading from the N-terminus, the 187-residue chain is UPF0302 protein SERP1032 (187 aa).

This sequence belongs to the UPF0302 family.

This Staphylococcus epidermidis (strain ATCC 35984 / DSM 28319 / BCRC 17069 / CCUG 31568 / BM 3577 / RP62A) protein is UPF0302 protein SERP1032.